Here is a 1031-residue protein sequence, read N- to C-terminus: Error-prone DNA polymerase (1031 aa).

It belongs to the DNA polymerase type-C family. DnaE2 subfamily.

It is found in the cytoplasm. It catalyses the reaction DNA(n) + a 2'-deoxyribonucleoside 5'-triphosphate = DNA(n+1) + diphosphate. In terms of biological role, DNA polymerase involved in damage-induced mutagenesis and translesion synthesis (TLS). It is not the major replicative DNA polymerase. The protein is Error-prone DNA polymerase of Pseudomonas syringae pv. syringae (strain B728a).